The chain runs to 450 residues: Probable 1,4-beta-D-glucan cellobiohydrolase C (450 aa).

The first 19 residues, 1-19 (MKHLASSIALTLLLPAVQA), serve as a signal peptide directing secretion. In terms of domain architecture, CBM1 spans 20 to 55 (QQTVWGQCGGQGWSGPTNCVAGAACSTLNPYYAQCI). Cystine bridges form between Cys27–Cys44 and Cys38–Cys54. Residues 59 to 90 (TATSTTLSTTTTTQTTTKPTTTGPTTSAPTVT) form a thr-rich linker region. Positions 63–89 (TTLSTTTTTQTTTKPTTTGPTTSAPTV) are disordered. The catalytic stretch occupies residues 91 to 450 (ASGNPFSGYQ…QLLTNANPSF (360 aa)). Asp180 is a catalytic residue. 2 disulfide bridges follow: Cys181/Cys240 and Cys372/Cys419. Catalysis depends on Asp226, which acts as the Proton donor. Catalysis depends on Asp405, which acts as the Nucleophile. N-linked (GlcNAc...) asparagine glycosylation occurs at Asn409.

This sequence belongs to the glycosyl hydrolase 6 (cellulase B) family.

It localises to the secreted. The enzyme catalyses Hydrolysis of (1-&gt;4)-beta-D-glucosidic linkages in cellulose and cellotetraose, releasing cellobiose from the non-reducing ends of the chains.. In terms of biological role, the biological conversion of cellulose to glucose generally requires three types of hydrolytic enzymes: (1) Endoglucanases which cut internal beta-1,4-glucosidic bonds; (2) Exocellobiohydrolases that cut the disaccharide cellobiose from the non-reducing end of the cellulose polymer chain; (3) Beta-1,4-glucosidases which hydrolyze the cellobiose and other short cello-oligosaccharides to glucose. The chain is Probable 1,4-beta-D-glucan cellobiohydrolase C (cbhC) from Neosartorya fischeri (strain ATCC 1020 / DSM 3700 / CBS 544.65 / FGSC A1164 / JCM 1740 / NRRL 181 / WB 181) (Aspergillus fischerianus).